Here is a 198-residue protein sequence, read N- to C-terminus: Acireductone dioxygenase (198 aa).

Histidine 97, histidine 99, glutamate 103, and histidine 141 together coordinate Fe(2+). Ni(2+) contacts are provided by histidine 97, histidine 99, glutamate 103, and histidine 141.

The protein belongs to the acireductone dioxygenase (ARD) family. Monomer. Requires Fe(2+) as cofactor. It depends on Ni(2+) as a cofactor.

It catalyses the reaction 1,2-dihydroxy-5-(methylsulfanyl)pent-1-en-3-one + O2 = 3-(methylsulfanyl)propanoate + CO + formate + 2 H(+). The catalysed reaction is 1,2-dihydroxy-5-(methylsulfanyl)pent-1-en-3-one + O2 = 4-methylsulfanyl-2-oxobutanoate + formate + 2 H(+). The protein operates within amino-acid biosynthesis; L-methionine biosynthesis via salvage pathway; L-methionine from S-methyl-5-thio-alpha-D-ribose 1-phosphate: step 5/6. Its function is as follows. Catalyzes 2 different reactions between oxygen and the acireductone 1,2-dihydroxy-3-keto-5-methylthiopentene (DHK-MTPene) depending upon the metal bound in the active site. Fe-containing acireductone dioxygenase (Fe-ARD) produces formate and 2-keto-4-methylthiobutyrate (KMTB), the alpha-ketoacid precursor of methionine in the methionine recycle pathway. Ni-containing acireductone dioxygenase (Ni-ARD) produces methylthiopropionate, carbon monoxide and formate, and does not lie on the methionine recycle pathway. This Synechococcus elongatus (strain ATCC 33912 / PCC 7942 / FACHB-805) (Anacystis nidulans R2) protein is Acireductone dioxygenase.